The primary structure comprises 335 residues: Ferredoxin--NADP reductase (335 aa).

Residues Asp34, Gln42, Tyr47, Ala87, Phe121, Asp287, and Thr328 each coordinate FAD.

This sequence belongs to the ferredoxin--NADP reductase type 2 family. Homodimer. FAD is required as a cofactor.

The catalysed reaction is 2 reduced [2Fe-2S]-[ferredoxin] + NADP(+) + H(+) = 2 oxidized [2Fe-2S]-[ferredoxin] + NADPH. This is Ferredoxin--NADP reductase from Rickettsia felis (strain ATCC VR-1525 / URRWXCal2) (Rickettsia azadi).